A 362-amino-acid polypeptide reads, in one-letter code: MASGSAGKPTGEAASPAPGSAVGGASSQPRKRLVSICDHCKGKMQLVADLLLLSSEARPVLFEGPASPGAGAESFEQCRDTIIARTKGLSILTHDVQSQLNMGRFGEAGDSLVELGDLVVSLTECSAHAAYLAAVATPGAQPAQPGLVDRYRVTRCRHEVEQGCAVLRATPLADMTPQLLLEVSQGLSRNLKFLTDACALASDKSRDRFSREQFKLGVKCMSTSASALLACVREVKAAPSELARSRCALFSGPLVQAVSALVGFATEPQFLGRAAAVSTEGKAVQTAILGGAMSVVSACVLLTQCLRDLAQHPDGSAKMSDHRERLRNSACAVSEGCTLLSQALRERSSPRTLPPVNSNSVN.

Residues methionine 1–serine 27 form a disordered region. An N-acetylalanine modification is found at alanine 2. A compositionally biased stretch (low complexity) spans proline 9–serine 27.

As to quaternary structure, may homodimerize. Interacts with F-actin. Ubiquitous.

Functionally, actin-binding protein which may have an oncogenic function and regulates cell proliferation, migration and invasion in cancer cells. The sequence is that of Talin rod domain-containing protein 1 from Mus musculus (Mouse).